We begin with the raw amino-acid sequence, 217 residues long: MRLRHKPYAMDRINEYSHFVIGNPEERAGNWKEVFGNEQPIHIEVGTGRGRFMYDMAKANPHINYIGIEKFTSVVVDALDKLIEEELPNLKLINKDAEDLTVFFAKGEIDRVYLNFSDPWPKKRHTKRRLTYKTFLRNYEEVLVEGGEIHFKTDNQGLFEYSLMSMAEYGMLLTYLSLDLHNSDFEGNIMTEYEEKFSSKGHRIYRVEAKYRTEPMQ.

S-adenosyl-L-methionine-binding residues include Glu-44, Glu-69, Asp-96, and Asp-118. Asp-118 is a catalytic residue. Residues Lys-122, Asp-154, and 191-194 (TEYE) each bind substrate.

It belongs to the class I-like SAM-binding methyltransferase superfamily. TrmB family.

The catalysed reaction is guanosine(46) in tRNA + S-adenosyl-L-methionine = N(7)-methylguanosine(46) in tRNA + S-adenosyl-L-homocysteine. The protein operates within tRNA modification; N(7)-methylguanine-tRNA biosynthesis. Catalyzes the formation of N(7)-methylguanine at position 46 (m7G46) in tRNA. This Bacillus thuringiensis (strain Al Hakam) protein is tRNA (guanine-N(7)-)-methyltransferase.